The following is a 660-amino-acid chain: Epithelial sodium channel subunit gamma (660 aa).

The Cytoplasmic segment spans residues 1 to 55 (MSKSGKKLTQKLKKNLPVTGPQAPTLYELMQWYCLNTNTHGCRRIVVSKGRLRRW). Residues 56 to 76 (IWISLTLCAVAVIFWQCALLL) traverse the membrane as a helical segment. Topologically, residues 77–537 (MSYYSVSASI…VTLLSNFGGQ (461 aa)) are extracellular. 8 disulfide bridges follow: Cys-101–Cys-286, Cys-209–Cys-217, Cys-263–Cys-270, Cys-375–Cys-460, Cys-397–Cys-456, Cys-401–Cys-452, Cys-410–Cys-437, and Cys-412–Cys-426. The helical transmembrane segment at 538 to 558 (LGLWMSCSMICVLEIIEVFFI) threads the bilayer. Residues 559 to 660 (DSFWVVLRQR…IDSDEDVERL (102 aa)) lie on the Cytoplasmic side of the membrane.

Belongs to the amiloride-sensitive sodium channel (TC 1.A.6) family. SCNN1G subfamily. In terms of assembly, component of the heterotrimeric epithelial sodium channel (ENaC) composed of an alpha/SCNN1A, a beta/SCNN1B and a gamma/SCNN1G subunit.

It is found in the apical cell membrane. It catalyses the reaction Na(+)(in) = Na(+)(out). With respect to regulation, originally identified and characterized by its inhibition by the diuretic drug amiloride. Its function is as follows. This is one of the three pore-forming subunits of the heterotrimeric epithelial sodium channel (ENaC), a critical regulator of sodium balance and fluid homeostasis. ENaC operates in epithelial tissues, where it mediates the electrodiffusion of sodium ions from extracellular fluid through the apical membrane of cells, with water following osmotically. The chain is Epithelial sodium channel subunit gamma (scnn1g-a) from Xenopus laevis (African clawed frog).